We begin with the raw amino-acid sequence, 118 residues long: Non-specific lipid-transfer protein 3 (118 aa).

An N-terminal signal peptide occupies residues 1–25 (MARSMNLACVALVMCMVVIAPMAEA). 4 cysteine pairs are disulfide-bonded: C29–C76, C39–C53, C54–C99, and C74–C113.

This sequence belongs to the plant LTP family.

Plant non-specific lipid-transfer proteins transfer phospholipids as well as galactolipids across membranes. May play a role in wax or cutin deposition in the cell walls of expanding epidermal cells and certain secretory tissues. This chain is Non-specific lipid-transfer protein 3, found in Lens culinaris (Lentil).